Reading from the N-terminus, the 880-residue chain is GRB2-associated and regulator of MAPK protein 2 (880 aa).

The interval 12–320 (RWSMGAFPLD…HFLLLTDTPR (309 aa)) is CABIT. Disordered stretches follow at residues 385–407 (PGAV…PGDS), 461–483 (IVGP…SEAV), 527–548 (SSLS…GSGS), 569–611 (SESS…ADTP), and 633–713 (APFG…ELGQ). Composition is skewed to low complexity over residues 640–663 (PFSG…STSG) and 683–696 (QGYS…LSSS). At Ser740 the chain carries Phosphoserine. Residues 813-877 (SALSLEEVSR…KIMQFIKGWR (65 aa)) form the SAM domain.

The protein belongs to the GAREM family.

Functionally, probable adapter protein that provides a critical link between cell surface epidermal growth factor receptor and the MAPK/ERK signaling pathway. The protein is GRB2-associated and regulator of MAPK protein 2 (Garem2) of Mus musculus (Mouse).